Reading from the N-terminus, the 127-residue chain is RxLR effector protein CRE6 (127 aa).

The first 19 residues, 1 to 19, serve as a signal peptide directing secretion; it reads MIRNALLVLVFVLIGTISA. A RxLR-dEER motif is present at residues 48 to 67; the sequence is RLLRQGSVKEGGVHDATEER.

This sequence belongs to the RxLR effector family.

The protein localises to the secreted. It is found in the host cell. Functionally, effector that is involved in host plant infection. Contributes to virulence during the early infection stage, by inhibiting plant defense responses induced by both PAMP-triggered immunity (PTI) and effector-triggered immunity (ETI). In Phytophthora infestans (strain T30-4) (Potato late blight agent), this protein is RxLR effector protein CRE6.